The primary structure comprises 366 residues: tRNA(Met) cytidine acetate ligase (366 aa).

ATP is bound by residues 7 to 20 (IAEF…HQYL), G96, N152, and R175.

The protein belongs to the TmcAL family.

It is found in the cytoplasm. It catalyses the reaction cytidine(34) in elongator tRNA(Met) + acetate + ATP = N(4)-acetylcytidine(34) in elongator tRNA(Met) + AMP + diphosphate. Functionally, catalyzes the formation of N(4)-acetylcytidine (ac(4)C) at the wobble position of elongator tRNA(Met), using acetate and ATP as substrates. First activates an acetate ion to form acetyladenylate (Ac-AMP) and then transfers the acetyl group to tRNA to form ac(4)C34. The protein is tRNA(Met) cytidine acetate ligase of Streptococcus equi subsp. zooepidemicus (strain MGCS10565).